Reading from the N-terminus, the 780-residue chain is Exocyst complex component 3-like protein (780 aa).

Belongs to the SEC6 family.

The protein localises to the cytoplasmic vesicle. It localises to the secretory vesicle. In terms of biological role, as part of the exocyst, may play a role in regulated exocytosis. The protein is Exocyst complex component 3-like protein (exoc3l1) of Danio rerio (Zebrafish).